The sequence spans 209 residues: Protein ASG7 (209 aa).

The Lumenal portion of the chain corresponds to 1-49 (MTTLASSIEHKTKHLAAPFENDENTWMKKYCCQCKSCKMSVPVQPWLPR). The helical transmembrane segment at 50 to 70 (FFVFGILCPVFWLVNLLAWWF) threads the bilayer. Residues 71 to 184 (LQYWQPHELE…LLRKTFRNWN (114 aa)) lie on the Cytoplasmic side of the membrane. Phosphoserine is present on residues S121, S123, and S125. Phosphothreonine is present on T153. The chain crosses the membrane as a helical span at residues 185 to 205 (LRSLLGLLIDSILIIFVVLLC). Residues 206–209 (KKSR) lie on the Lumenal side of the membrane.

The protein resides in the endomembrane system. Required for receptor inhibition of inappropriately expressed a-factor receptor (STE3) in MAT a cells. Inhibits signaling by relocalizing the G protein beta-gamma (STE4-STE18) subunit to intracellular membranes. May also be a mechanism for the down-regulation of the mating pheromone response after the zygotic fusion event, promoting the transition of the new diploid cell to vegetative growth. This Saccharomyces cerevisiae (strain YJM789) (Baker's yeast) protein is Protein ASG7 (ASG7).